Here is a 429-residue protein sequence, read N- to C-terminus: Saccharopine dehydrogenase-like oxidoreductase (429 aa).

Alanine 2 is modified (N-acetylalanine). Phosphoserine occurs at positions 209, 215, and 217.

It belongs to the saccharopine dehydrogenase family.

This chain is Saccharopine dehydrogenase-like oxidoreductase (Sccpdh), found in Rattus norvegicus (Rat).